The following is a 330-amino-acid chain: Putative aminohydrolase AF_1775 (330 aa).

H54, H56, H181, and D253 together coordinate Zn(2+).

It belongs to the metallo-dependent hydrolases superfamily. ATZ/TRZ family.

The sequence is that of Putative aminohydrolase AF_1775 from Archaeoglobus fulgidus (strain ATCC 49558 / DSM 4304 / JCM 9628 / NBRC 100126 / VC-16).